The following is a 1110-amino-acid chain: Serine/threonine-protein kinase PknK (1110 aa).

The 258-residue stretch at 26–283 (FDNVEEIGRG…TAADVGEELR (258 aa)) folds into the Protein kinase domain. ATP contacts are provided by residues 32 to 40 (IGRGGFGVV) and Lys55. The active-site Proton acceptor is the Asp149. Residues Asn154 and Asp167 each contribute to the Mg(2+) site. Thr179 and Thr181 each carry phosphothreonine; by autocatalysis. A disordered region spans residues 308 to 343 (RSPEAHAAHRHTGGGTPTVPTPPTPATKYRPSVPTG).

The protein belongs to the protein kinase superfamily. Ser/Thr protein kinase family. Forms oligomeric complexes in solution. Can autophosphorylate the carboxyl terminal region in addition to Thr-179 and Thr-181.

It is found in the cytoplasm. Its subcellular location is the cell membrane. It localises to the secreted. The protein localises to the cell wall. The enzyme catalyses L-seryl-[protein] + ATP = O-phospho-L-seryl-[protein] + ADP + H(+). The catalysed reaction is L-threonyl-[protein] + ATP = O-phospho-L-threonyl-[protein] + ADP + H(+). Its function is as follows. Key microbial factor involved in regulation of early and late events in tuberculosis infection, and in host-pathogen interactions. The sequence is that of Serine/threonine-protein kinase PknK (pknK) from Mycobacterium tuberculosis (strain CDC 1551 / Oshkosh).